A 388-amino-acid chain; its full sequence is Protein-glutamate methylesterase/protein-glutamine glutaminase 4 (388 aa).

The Response regulatory domain maps to 4–121 (KVLVVDDSGF…SGDASKIKRL (118 aa)). The residue at position 55 (Asp55) is a 4-aspartylphosphate. The tract at residues 137 to 196 (SGASAPASVPQPAKPAAPIPVREPPKPAAPVTRPAEPRAKAPPAKPEPKPEVKAAKSRRT) is disordered. Residues 148-164 (PAKPAAPIPVREPPKPA) show a composition bias toward pro residues. The CheB-type methylesterase domain occupies 197 to 388 (PRQDYKVVLI…FAPRLIDGVG (192 aa)). Active-site residues include Ser209, His236, and Asp332.

The protein belongs to the CheB family. Phosphorylated by CheA. Phosphorylation of the N-terminal regulatory domain activates the methylesterase activity.

The protein resides in the cytoplasm. The enzyme catalyses [protein]-L-glutamate 5-O-methyl ester + H2O = L-glutamyl-[protein] + methanol + H(+). The catalysed reaction is L-glutaminyl-[protein] + H2O = L-glutamyl-[protein] + NH4(+). Functionally, involved in chemotaxis. Part of a chemotaxis signal transduction system that modulates chemotaxis in response to various stimuli. Catalyzes the demethylation of specific methylglutamate residues introduced into the chemoreceptors (methyl-accepting chemotaxis proteins or MCP) by CheR. Also mediates the irreversible deamidation of specific glutamine residues to glutamic acid. The polypeptide is Protein-glutamate methylesterase/protein-glutamine glutaminase 4 (Hahella chejuensis (strain KCTC 2396)).